The sequence spans 33 residues: MNLEVVVQLGSLSLIVLAGPIIVLLLASQKGNL.

The helical transmembrane segment at 5 to 25 (VVVQLGSLSLIVLAGPIIVLL) threads the bilayer.

This sequence belongs to the Psb30/Ycf12 family. In terms of assembly, PSII is composed of 1 copy each of membrane proteins PsbA, PsbB, PsbC, PsbD, PsbE, PsbF, PsbH, PsbI, PsbJ, PsbK, PsbL, PsbM, PsbT, PsbX, PsbY, PsbZ, Psb30/Ycf12, peripheral proteins of the oxygen-evolving complex and a large number of cofactors. It forms dimeric complexes.

It is found in the plastid. The protein resides in the chloroplast thylakoid membrane. Functionally, a core subunit of photosystem II (PSII), probably helps stabilize the reaction center. This Mesostigma viride (Green alga) protein is Photosystem II reaction center protein Psb30.